The sequence spans 657 residues: Probable serine/threonine-protein kinase CA_C1728 (657 aa).

Residues 10-274 (YKIEEEIGVG…ELSNVKNNYV (265 aa)) enclose the Protein kinase domain. ATP-binding positions include 16-24 (IGVGGTAVV) and K39. D143 (proton acceptor) is an active-site residue. Residues 286 to 334 (PAQIQNESNPNNKLDNDDTYYNGEPYNKEQPQEEPQEENEEPKNKIKGN) are disordered. Over residues 288–298 (QIQNESNPNNK) the composition is skewed to polar residues. 3 PASTA domains span residues 375–441 (SVSK…DISS), 443–509 (DTDQ…VISR), and 512–577 (EVKK…VIGR). The interval 581-657 (TAVQPPNNNN…TNTPNGTGQK (77 aa)) is disordered. Low complexity-rich tracts occupy residues 584 to 600 (QPPN…QNQN), 613 to 637 (PTGG…PAGG), and 645 to 657 (GNVT…TGQK).

This sequence belongs to the protein kinase superfamily. Ser/Thr protein kinase family.

The catalysed reaction is L-seryl-[protein] + ATP = O-phospho-L-seryl-[protein] + ADP + H(+). It carries out the reaction L-threonyl-[protein] + ATP = O-phospho-L-threonyl-[protein] + ADP + H(+). This chain is Probable serine/threonine-protein kinase CA_C1728, found in Clostridium acetobutylicum (strain ATCC 824 / DSM 792 / JCM 1419 / IAM 19013 / LMG 5710 / NBRC 13948 / NRRL B-527 / VKM B-1787 / 2291 / W).